The chain runs to 378 residues: Glutamate 5-kinase (378 aa).

Lys-20 serves as a coordination point for ATP. Positions 60, 147, and 159 each coordinate substrate. ATP is bound by residues 179 to 180 (TD) and 221 to 227 (TGGMLTK). In terms of domain architecture, PUA spans 286 to 364 (RGRVVLDDGA…SQIARILGSM (79 aa)).

The protein belongs to the glutamate 5-kinase family.

The protein resides in the cytoplasm. It catalyses the reaction L-glutamate + ATP = L-glutamyl 5-phosphate + ADP. Its pathway is amino-acid biosynthesis; L-proline biosynthesis; L-glutamate 5-semialdehyde from L-glutamate: step 1/2. Catalyzes the transfer of a phosphate group to glutamate to form L-glutamate 5-phosphate. This chain is Glutamate 5-kinase, found in Bordetella pertussis (strain Tohama I / ATCC BAA-589 / NCTC 13251).